The sequence spans 175 residues: UPF0398 protein SGO_0588 (175 aa).

This sequence belongs to the UPF0398 family.

The protein is UPF0398 protein SGO_0588 of Streptococcus gordonii (strain Challis / ATCC 35105 / BCRC 15272 / CH1 / DL1 / V288).